The sequence spans 755 residues: Proprotein convertase subtilisin/kexin type 4 (755 aa).

A signal peptide spans 1-25 (MRPAPIALWLRLVLALALVRPRAVG). Residues 26–113 (WAPVRAPIYV…QQTLQRRVKR (88 aa)) constitute a propeptide that is removed on maturation. Positions 126-440 (QWYMNSEAQP…YGLLDAGLLV (315 aa)) constitute a Peptidase S8 domain. Residues Asp158, His199, and Ser373 each act as charge relay system in the active site. The 133-residue stretch at 449–581 (TQPQRKCAVR…TLLLYGTAED (133 aa)) folds into the P/Homo B domain. Residues Asn475 and Asn629 are each glycosylated (N-linked (GlcNAc...) asparagine). The helical transmembrane segment at 709-729 (AMVLSLLAVTLGGPVLCGMSM) threads the bilayer.

Belongs to the peptidase S8 family. Furin subfamily. The proPCSK4 form interacts with HSPA5; the interaction takes place at the endoplasmic reticulum. In terms of processing, N-glycosylated. Post-translationally, synthesized in the endoplasmic reticulum as a zymogen, is matured by autocatalytic cleavage between the prodomain and the catalytic domain. In terms of tissue distribution, placenta.

It is found in the membrane. The protein localises to the cytoplasmic vesicle. Its subcellular location is the secretory vesicle. It localises to the acrosome membrane. Proprotein convertase involved in the processing of hormone and other protein precursors at sites comprised of pairs of basic amino acid residues. In males, important for ADAM2 processing as well as other acrosomal proteins with roles in fertilization and critical for normal fertilization events such as sperm capacitation, acrosome reaction and binding of sperm to zona pellucida. Also plays a role in female fertility, involved in the regulation of trophoblast migration and placental development, may be through the proteolytical processing and activation of proteins such as IGF2. May also participate in folliculogenesis in the ovaries. The chain is Proprotein convertase subtilisin/kexin type 4 from Homo sapiens (Human).